The following is a 304-amino-acid chain: MSASTAAPARDRLRIAIQKSGRLAEPARSLLAACGLSWRQSRDKLFCYGESLPVDLLLVRDDDIPGLIADGVCDLGIVGQNELEEQAAERRGNGLPAAYHAVRGVGFGQCRLMLAVPEEWDWQGVAQLAGKRIATSYPAILADWLERQGIEATVVELSGSVEIAPRLGTADLICDLVSSGATLAANQLKPVELVMESEAVLAGAVREPADARAGLLAMLLRRMDGVLKLRDSKLLMFRADQDNVDALRRLLPDADPLVQLPDDGNGVLRLQTMCHGAVTWQRLEELERAGAQGLMVLTVERSLA.

This sequence belongs to the ATP phosphoribosyltransferase family. Long subfamily. The cofactor is Mg(2+).

It is found in the cytoplasm. It carries out the reaction 1-(5-phospho-beta-D-ribosyl)-ATP + diphosphate = 5-phospho-alpha-D-ribose 1-diphosphate + ATP. It functions in the pathway amino-acid biosynthesis; L-histidine biosynthesis; L-histidine from 5-phospho-alpha-D-ribose 1-diphosphate: step 1/9. With respect to regulation, feedback inhibited by histidine. Catalyzes the condensation of ATP and 5-phosphoribose 1-diphosphate to form N'-(5'-phosphoribosyl)-ATP (PR-ATP). Has a crucial role in the pathway because the rate of histidine biosynthesis seems to be controlled primarily by regulation of HisG enzymatic activity. In Xanthomonas oryzae pv. oryzae (strain MAFF 311018), this protein is ATP phosphoribosyltransferase.